The following is a 331-amino-acid chain: Large ribosomal subunit protein uL3 (331 aa).

It belongs to the universal ribosomal protein uL3 family. As to quaternary structure, part of the 50S ribosomal subunit. Forms a cluster with proteins L14 and L24e.

One of the primary rRNA binding proteins, it binds directly near the 3'-end of the 23S rRNA, where it nucleates assembly of the 50S subunit. This chain is Large ribosomal subunit protein uL3, found in Archaeoglobus fulgidus (strain ATCC 49558 / DSM 4304 / JCM 9628 / NBRC 100126 / VC-16).